Consider the following 115-residue polypeptide: Holo-[acyl-carrier-protein] synthase (115 aa).

Residues D8 and E50 each coordinate Mg(2+).

Belongs to the P-Pant transferase superfamily. AcpS family. It depends on Mg(2+) as a cofactor.

The protein localises to the cytoplasm. It catalyses the reaction apo-[ACP] + CoA = holo-[ACP] + adenosine 3',5'-bisphosphate + H(+). In terms of biological role, transfers the 4'-phosphopantetheine moiety from coenzyme A to a Ser of acyl-carrier-protein. This is Holo-[acyl-carrier-protein] synthase from Pseudarthrobacter chlorophenolicus (strain ATCC 700700 / DSM 12829 / CIP 107037 / JCM 12360 / KCTC 9906 / NCIMB 13794 / A6) (Arthrobacter chlorophenolicus).